The sequence spans 162 residues: Ribosomal RNA large subunit methyltransferase H (162 aa).

S-adenosyl-L-methionine-binding positions include Leu-78, Gly-109, and 128-133 (LSPLTL).

Belongs to the RNA methyltransferase RlmH family. In terms of assembly, homodimer.

It localises to the cytoplasm. The catalysed reaction is pseudouridine(1915) in 23S rRNA + S-adenosyl-L-methionine = N(3)-methylpseudouridine(1915) in 23S rRNA + S-adenosyl-L-homocysteine + H(+). Functionally, specifically methylates the pseudouridine at position 1915 (m3Psi1915) in 23S rRNA. The polypeptide is Ribosomal RNA large subunit methyltransferase H (Psychrobacter sp. (strain PRwf-1)).